The sequence spans 238 residues: tRNA1(Val) (adenine(37)-N6)-methyltransferase (238 aa).

The protein belongs to the methyltransferase superfamily. tRNA (adenine-N(6)-)-methyltransferase family.

Its subcellular location is the cytoplasm. It carries out the reaction adenosine(37) in tRNA1(Val) + S-adenosyl-L-methionine = N(6)-methyladenosine(37) in tRNA1(Val) + S-adenosyl-L-homocysteine + H(+). Functionally, specifically methylates the adenine in position 37 of tRNA(1)(Val) (anticodon cmo5UAC). This is tRNA1(Val) (adenine(37)-N6)-methyltransferase from Cytophaga hutchinsonii (strain ATCC 33406 / DSM 1761 / CIP 103989 / NBRC 15051 / NCIMB 9469 / D465).